The sequence spans 397 residues: MDVDLASVEVVFAQKLACGEPATRQRALRVLHDWIRDQSAKKHFDDADLMRLCKGLHYVMWMQDKMILQEELADRIGGLINIFTSEEEKVRFVACFLKSLSKEWPHIDRWRMDKFLMEVRRMVRACFTHLAELKWKKDIRDEYWKVFQETTISTDKSFNEALKFHFASILLDELDAAGGLTKKQVTACLKPYIELLGNKDISEYLFTSLYEEIFKTILQQKSDLITAVEEGEEMDQGGIEFSYKEIGALLFEVGKQEHLNAKRRKKIYDLVKKFDKSSRGQDPLHFETPVPKERLTRHDYEEAEKKAIVLANSFKQERKSSRKVKSQIKKRAREAAEAARQENGDDVPDDEIAEVKKGNGKKTAVPKVKKGRPLLKAKGVGKKRMVGGLKRKAGKKN.

The segment covering glutamate 334–asparagine 343 has biased composition (basic and acidic residues). Residues glutamate 334–proline 366 are disordered.

This sequence belongs to the RRP1 family.

The protein localises to the nucleus. In terms of biological role, may be involved in the generation of 28S rRNA. The chain is Ribosomal RNA processing protein 1 homolog from Caenorhabditis elegans.